The following is a 132-amino-acid chain: Protein KRTCAP2 homolog (132 aa).

4 helical membrane-spanning segments follow: residues 1–21 (MAVPTSVSLVLASVTAVLIFS), 35–55 (MATVFGGFLGSWLFILSLTAV), 69–89 (AKLFPEVAFCLIGSLFACGMV), and 92–109 (VCATTCILFSVAALYYIN).

The protein belongs to the KRTCAP2 family. As to quaternary structure, component of the oligosaccharyltransferase (OST) complex.

The protein resides in the membrane. In terms of biological role, subunit of the oligosaccharyl transferase (OST) complex that catalyzes the initial transfer of a defined glycan (Glc(3)Man(9)GlcNAc(2) in eukaryotes) from the lipid carrier dolichol-pyrophosphate to an asparagine residue within an Asn-X-Ser/Thr consensus motif in nascent polypeptide chains, the first step in protein N-glycosylation. N-glycosylation occurs cotranslationally and the complex associates with the Sec61 complex at the channel-forming translocon complex that mediates protein translocation across the endoplasmic reticulum (ER). All subunits are required for a maximal enzyme activity. In Aedes aegypti (Yellowfever mosquito), this protein is Protein KRTCAP2 homolog.